A 1348-amino-acid polypeptide reads, in one-letter code: Phosphoribosylformylglycinamidine synthase (1348 aa).

Residues 300 to 311 (GAATGAGGEIRD) and A701 contribute to the ATP site. 4 residues coordinate Mg(2+): D702, E741, N745, and D941. Position 943 (S943) interacts with ATP. The Glutamine amidotransferase type-1 domain maps to 1099 to 1348 (VAILREQGVN…MFRNARVWCG (250 aa)). C1192 acts as the Nucleophile in catalysis. Catalysis depends on residues H1313 and E1315.

It in the N-terminal section; belongs to the FGAMS family. In terms of assembly, monomer.

Its subcellular location is the cytoplasm. It catalyses the reaction N(2)-formyl-N(1)-(5-phospho-beta-D-ribosyl)glycinamide + L-glutamine + ATP + H2O = 2-formamido-N(1)-(5-O-phospho-beta-D-ribosyl)acetamidine + L-glutamate + ADP + phosphate + H(+). It functions in the pathway purine metabolism; IMP biosynthesis via de novo pathway; 5-amino-1-(5-phospho-D-ribosyl)imidazole from N(2)-formyl-N(1)-(5-phospho-D-ribosyl)glycinamide: step 1/2. In terms of biological role, phosphoribosylformylglycinamidine synthase involved in the purines biosynthetic pathway. Catalyzes the ATP-dependent conversion of formylglycinamide ribonucleotide (FGAR) and glutamine to yield formylglycinamidine ribonucleotide (FGAM) and glutamate. The chain is Phosphoribosylformylglycinamidine synthase from Xanthomonas campestris pv. campestris (strain ATCC 33913 / DSM 3586 / NCPPB 528 / LMG 568 / P 25).